Consider the following 173-residue polypeptide: Large ribosomal subunit protein uL10 (173 aa).

It belongs to the universal ribosomal protein uL10 family. In terms of assembly, part of the ribosomal stalk of the 50S ribosomal subunit. The N-terminus interacts with L11 and the large rRNA to form the base of the stalk. The C-terminus forms an elongated spine to which L12 dimers bind in a sequential fashion forming a multimeric L10(L12)X complex.

Its function is as follows. Forms part of the ribosomal stalk, playing a central role in the interaction of the ribosome with GTP-bound translation factors. This is Large ribosomal subunit protein uL10 (rplJ) from Synechocystis sp. (strain ATCC 27184 / PCC 6803 / Kazusa).